Here is a 321-residue protein sequence, read N- to C-terminus: Lipoyl synthase (321 aa).

Residues cysteine 68, cysteine 73, cysteine 79, cysteine 94, cysteine 98, cysteine 101, and serine 308 each coordinate [4Fe-4S] cluster. Positions 80-297 (FNHGTATFMI…KEVALELGFT (218 aa)) constitute a Radical SAM core domain.

The protein belongs to the radical SAM superfamily. Lipoyl synthase family. Requires [4Fe-4S] cluster as cofactor.

Its subcellular location is the cytoplasm. The catalysed reaction is [[Fe-S] cluster scaffold protein carrying a second [4Fe-4S](2+) cluster] + N(6)-octanoyl-L-lysyl-[protein] + 2 oxidized [2Fe-2S]-[ferredoxin] + 2 S-adenosyl-L-methionine + 4 H(+) = [[Fe-S] cluster scaffold protein] + N(6)-[(R)-dihydrolipoyl]-L-lysyl-[protein] + 4 Fe(3+) + 2 hydrogen sulfide + 2 5'-deoxyadenosine + 2 L-methionine + 2 reduced [2Fe-2S]-[ferredoxin]. It functions in the pathway protein modification; protein lipoylation via endogenous pathway; protein N(6)-(lipoyl)lysine from octanoyl-[acyl-carrier-protein]: step 2/2. Functionally, catalyzes the radical-mediated insertion of two sulfur atoms into the C-6 and C-8 positions of the octanoyl moiety bound to the lipoyl domains of lipoate-dependent enzymes, thereby converting the octanoylated domains into lipoylated derivatives. The polypeptide is Lipoyl synthase (Vibrio parahaemolyticus serotype O3:K6 (strain RIMD 2210633)).